The sequence spans 149 residues: MIALLQRVSEAAVRVDGETVGAIGPGILALIGVQRGDTEAQAARLLERILGYRLFEDEAGRMNLSLSDTGGGLLLVPQFTLAADTRKGMRASFTPAAEPGLGRALFDHLVSLACSVHTPVATGCFGAHMAVSLVNDGPVTFWLEVPPPR.

The short motif at 137–138 (GP) is the Gly-cisPro motif, important for rejection of L-amino acids element.

This sequence belongs to the DTD family. Homodimer.

The protein localises to the cytoplasm. It carries out the reaction glycyl-tRNA(Ala) + H2O = tRNA(Ala) + glycine + H(+). It catalyses the reaction a D-aminoacyl-tRNA + H2O = a tRNA + a D-alpha-amino acid + H(+). Its function is as follows. An aminoacyl-tRNA editing enzyme that deacylates mischarged D-aminoacyl-tRNAs. Also deacylates mischarged glycyl-tRNA(Ala), protecting cells against glycine mischarging by AlaRS. Acts via tRNA-based rather than protein-based catalysis; rejects L-amino acids rather than detecting D-amino acids in the active site. By recycling D-aminoacyl-tRNA to D-amino acids and free tRNA molecules, this enzyme counteracts the toxicity associated with the formation of D-aminoacyl-tRNA entities in vivo and helps enforce protein L-homochirality. This chain is D-aminoacyl-tRNA deacylase, found in Thioalkalivibrio sulfidiphilus (strain HL-EbGR7).